The primary structure comprises 544 residues: MESQRNILLIGLLFVSFLLWQQWQADQAPQPVAAAQTQSSIPASTVADSHSSDVPDADSAVPEAITASKELITVFTDQLEIKIDPVGGDIVYSALLSHKLEENGDDPFVLLEQTNDIYYIAQSGLIGRDGIDSSVKGRAHFDSASREYKLADGQDTLSVPLTYVSDKGVTYTKSFVFTRGKYNIAVDYKINNTSDASLQVQMYGQIKHSIKKSESSMMMPTYLGGAFSTDDIRYEKYSFDDMADKNLDDSTLGGWVAMLQHYFVSAWVPPATEKNIIFSSMKNGLANIGFRGELHDIAPGSEQVIKSEFYVGPKDQKALSVLSPSLNLVVDYGFLWWLAVPIYKLLMFFHSIVGNWGFAIILITLTVRGLLYPLTKAQYTSMAKMRNLQPKLAELKERFGDDRQKMGQAMMELYKKEKVNPMGGCLPILLQMPIFIALYWVLLESVELRHAPFMLWITDLSVQDPYYVLPILMGISMFVMQKMQPMAPTMDPMQVKMMQWMPVIFTVFFLWFPAGLVLYWLVGNLVAITQQKIIYAGLEKKGLK.

Residues 6-26 (NILLIGLLFVSFLLWQQWQAD) form a helical membrane-spanning segment. A disordered region spans residues 34-58 (AAQTQSSIPASTVADSHSSDVPDAD). A compositionally biased stretch (polar residues) spans 39-49 (SSIPASTVADS). Transmembrane regions (helical) follow at residues 345–365 (LLMFFHSIVGNWGFAIILITL), 423–443 (GGCLPILLQMPIFIALYWVLL), 460–480 (LSVQDPYYVLPILMGISMFVM), and 503–523 (VIFTVFFLWFPAGLVLYWLVG).

Belongs to the OXA1/ALB3/YidC family. Type 1 subfamily. In terms of assembly, interacts with the Sec translocase complex via SecD. Specifically interacts with transmembrane segments of nascent integral membrane proteins during membrane integration.

The protein localises to the cell inner membrane. In terms of biological role, required for the insertion and/or proper folding and/or complex formation of integral membrane proteins into the membrane. Involved in integration of membrane proteins that insert both dependently and independently of the Sec translocase complex, as well as at least some lipoproteins. Aids folding of multispanning membrane proteins. In Shewanella halifaxensis (strain HAW-EB4), this protein is Membrane protein insertase YidC.